A 200-amino-acid polypeptide reads, in one-letter code: Pyridoxal 5'-phosphate synthase subunit PdxT (200 aa).

An L-glutamine-binding site is contributed by glycine 52–serine 54. Catalysis depends on cysteine 84, which acts as the Nucleophile. L-glutamine contacts are provided by residues arginine 116 and isoleucine 145–arginine 146. Catalysis depends on charge relay system residues histidine 181 and glutamate 183.

This sequence belongs to the glutaminase PdxT/SNO family. As to quaternary structure, in the presence of PdxS, forms a dodecamer of heterodimers. Only shows activity in the heterodimer.

The catalysed reaction is aldehydo-D-ribose 5-phosphate + D-glyceraldehyde 3-phosphate + L-glutamine = pyridoxal 5'-phosphate + L-glutamate + phosphate + 3 H2O + H(+). The enzyme catalyses L-glutamine + H2O = L-glutamate + NH4(+). Its pathway is cofactor biosynthesis; pyridoxal 5'-phosphate biosynthesis. Catalyzes the hydrolysis of glutamine to glutamate and ammonia as part of the biosynthesis of pyridoxal 5'-phosphate. The resulting ammonia molecule is channeled to the active site of PdxS. This is Pyridoxal 5'-phosphate synthase subunit PdxT from Saccharolobus islandicus (strain Y.N.15.51 / Yellowstone #2) (Sulfolobus islandicus).